A 422-amino-acid polypeptide reads, in one-letter code: Elongation factor 1-gamma (422 aa).

In terms of domain architecture, GST N-terminal spans 1–82 (MALVLHAGKT…YVARLKADNP (82 aa)). Residues 87-215 (SLIDYAHIEQ…VKQTESVPPV (129 aa)) form the GST C-terminal domain. Positions 210 to 269 (ESVPPVPSAKKPSQPKETKSKAKEEPKKEAKKEPAKPKAEAAEEVEEAPKPKPKNPLDLL) are disordered. Residues 223 to 250 (QPKETKSKAKEEPKKEAKKEPAKPKAEA) show a composition bias toward basic and acidic residues. The EF-1-gamma C-terminal domain maps to 262-422 (PKNPLDLLPP…EALLDAKCFK (161 aa)).

In terms of assembly, EF-1 is composed of four subunits: alpha, beta, delta, and gamma.

Functionally, probably plays a role in anchoring the complex to other cellular components. In Prunus avium (Cherry), this protein is Elongation factor 1-gamma.